The sequence spans 172 residues: Adenine phosphoribosyltransferase (172 aa).

This sequence belongs to the purine/pyrimidine phosphoribosyltransferase family. In terms of assembly, homodimer.

The protein resides in the cytoplasm. The enzyme catalyses AMP + diphosphate = 5-phospho-alpha-D-ribose 1-diphosphate + adenine. It functions in the pathway purine metabolism; AMP biosynthesis via salvage pathway; AMP from adenine: step 1/1. Functionally, catalyzes a salvage reaction resulting in the formation of AMP, that is energically less costly than de novo synthesis. The chain is Adenine phosphoribosyltransferase from Roseiflexus castenholzii (strain DSM 13941 / HLO8).